We begin with the raw amino-acid sequence, 428 residues long: Divergent protein kinase domain 1A (428 aa).

The Cytoplasmic segment spans residues 1-27; that stretch reads MARSLCPGAWLRKPYYLQARFSYVRMK. The chain crosses the membrane as a helical span at residues 28–48; the sequence is YLFFSWLVVFVGSWIIYVQYS. Topologically, residues 49–428 are lumenal; sequence TYTELCRGKD…WKKISYTNDS (380 aa).

Belongs to the DIPK family. Among the many cysteines in the lumenal domain, most are probably involved in disulfide bonds.

The protein resides in the endoplasmic reticulum membrane. The polypeptide is Divergent protein kinase domain 1A (Homo sapiens (Human)).